Consider the following 483-residue polypeptide: MKHYVAVDIGASSGRLILGKLVDEKLQLEEIHRFKNGFTYRDGHERWEIDQLMQEIFIGLEKVKQLGISECVLGIDTWGVDYVLIGASGEKLADPISYRDKRTLNAVQNLTSEYPREYIYKKTGIQFMELNTLYQLYVEERDLLERAEKILLIPDYIGYVLTGVKVAETTNSSTTQMLNLREQLFDKDLLSHLNIDVEKFAPLTDAGTYLGKVKEEWLEKYDIPNCDVVTVATHDTASAVVGTPAEGENWAFLSSGTWSLIGMELSAPINNEAAFKENYTNEWGAYGTYRFLKNIMGLWIVQEIARMDDYKHSFAEMAEEASNYPYFKQIINVNDARFNNPENMVDEIKLYCQETGQTIPETIGELTNCVYGSLALYYALELEKMTEITGKKIEKLYIVGGGSNVAMLNQLTAKLAGIEVFAGPSEATAIGNLVVQMINQGEIESMRAGRKIIRNSFEIGEFSCGDVRFEEIKERFTKVLEFN.

Residue 11–15 (ASSGR) coordinates ATP. Substrate contacts are provided by residues glycine 79 and 234–236 (HDT). Catalysis depends on aspartate 235, which acts as the Proton acceptor. Threonine 257 is an ATP binding site. Residue asparagine 294 participates in substrate binding. Residue glutamine 302 participates in ATP binding. A disulfide bridge links cysteine 352 with cysteine 369. Glycine 401 provides a ligand contact to ATP.

Belongs to the rhamnulokinase family. Mg(2+) is required as a cofactor.

The enzyme catalyses L-rhamnulose + ATP = L-rhamnulose 1-phosphate + ADP + H(+). The protein operates within carbohydrate degradation; L-rhamnose degradation; glycerone phosphate from L-rhamnose: step 2/3. In terms of biological role, involved in the catabolism of L-rhamnose (6-deoxy-L-mannose). Catalyzes the transfer of the gamma-phosphate group from ATP to the 1-hydroxyl group of L-rhamnulose to yield L-rhamnulose 1-phosphate. In Listeria monocytogenes serotype 4b (strain F2365), this protein is Rhamnulokinase.